Here is a 200-residue protein sequence, read N- to C-terminus: Transcription elongation factor A protein-like 5 (200 aa).

Composition is skewed to basic and acidic residues over residues 1 to 49 (MEKF…KLEV), 61 to 85 (GEGK…KPDS), 94 to 106 (RAAE…DYVP), 114 to 153 (DRGT…EELR), and 190 to 200 (GQKDLEDAPFV). The segment at 1–200 (MEKFYKENEG…QKDLEDAPFV (200 aa)) is disordered.

The protein belongs to the TFS-II family. TFA subfamily.

The protein localises to the nucleus. May be involved in transcriptional regulation. This is Transcription elongation factor A protein-like 5 (Tceal5) from Mus musculus (Mouse).